Consider the following 63-residue polypeptide: Defensin-like protein 278 (63 aa).

Residues 1-15 (MSLVYMYMYIGVVMS) form the signal peptide. Disulfide bonds link cysteine 31–cysteine 48, cysteine 37–cysteine 53, and cysteine 41–cysteine 55.

This sequence belongs to the DEFL family.

The protein localises to the secreted. The chain is Defensin-like protein 278 from Arabidopsis thaliana (Mouse-ear cress).